Here is a 420-residue protein sequence, read N- to C-terminus: 3-isopropylmalate dehydratase large subunit (420 aa).

[4Fe-4S] cluster-binding residues include C300, C361, and C364.

Belongs to the aconitase/IPM isomerase family. LeuC type 2 subfamily. In terms of assembly, heterodimer of LeuC and LeuD. Requires [4Fe-4S] cluster as cofactor.

The enzyme catalyses (2R,3S)-3-isopropylmalate = (2S)-2-isopropylmalate. Its pathway is amino-acid biosynthesis; L-leucine biosynthesis; L-leucine from 3-methyl-2-oxobutanoate: step 2/4. Functionally, catalyzes the isomerization between 2-isopropylmalate and 3-isopropylmalate, via the formation of 2-isopropylmaleate. The protein is 3-isopropylmalate dehydratase large subunit of Endomicrobium trichonymphae.